Reading from the N-terminus, the 1265-residue chain is 1-phosphatidylinositol 4,5-bisphosphate phosphodiesterase gamma-2 (1265 aa).

A PH domain is found at 20 to 131 (RALELGTVMT…WLSGLKILHQ (112 aa)). The 145-residue stretch at 312–456 (QDMNNPLSHY…LREKIIIKHK (145 aa)) folds into the PI-PLC X-box domain. Catalysis depends on residues His327 and His372. SH2 domains are found at residues 532-635 (WFHK…TDPV) and 646-735 (WYYD…RYPV). 2 positions are modified to phosphotyrosine; by BTK: Tyr753 and Tyr759. Residues 769-829 (MPQRTVKALY…PSNYVEDIST (61 aa)) form the SH3 domain. Residues 930–1044 (LSDLVVYCKP…GYVLQPESMR (115 aa)) enclose the PI-PLC Y-box domain. A C2 domain is found at 1038–1169 (LQPESMRTEK…SGFRSVPLKN (132 aa)). Position 1197 is a phosphotyrosine; by BTK (Tyr1197). A phosphotyrosine mark is found at Tyr1217 and Tyr1245.

In terms of assembly, part of a complex composed of EEIG1, TNFRSF11A/RANK, PLCG2, GAB2, TEC and BTK; complex formation increases in the presence of TNFSF11/RANKL. Interacts (via SH2 domain) with CSF1R (tyrosine phosphorylated). Interacts constitutively with THEMIS2. Ca(2+) serves as cofactor. Post-translationally, phosphorylated on tyrosine residues by CSF1R. Phosphorylated on tyrosine residues by BTK and SYK; upon ligand-induced activation of a variety of growth factor receptors and immune system receptors. Phosphorylation leads to increased phospholipase activity.

The protein resides in the membrane raft. The enzyme catalyses a 1,2-diacyl-sn-glycero-3-phospho-(1D-myo-inositol-4,5-bisphosphate) + H2O = 1D-myo-inositol 1,4,5-trisphosphate + a 1,2-diacyl-sn-glycerol + H(+). The production of the second messenger molecules diacylglycerol (DAG) and inositol 1,4,5-trisphosphate (IP3) is mediated by activated phosphatidylinositol-specific phospholipase C enzymes. It is a crucial enzyme in transmembrane signaling. This Homo sapiens (Human) protein is 1-phosphatidylinositol 4,5-bisphosphate phosphodiesterase gamma-2.